A 355-amino-acid chain; its full sequence is MADIPAQLVKQLREMTDAGMMDCKKALVETEGNLEKAVEYLREKGLSKAAKKADRIASEGIVSVEVANDFSKASIIEINSETDFVAKNDTFKELVAQTSKIVYDNALSSAQSLHTMSIGGVKFEEYLQQNIAKIGENIVVRRIASIEAQGKGIVNGYVHSNGRVGVLIAMKFDKESSKVACVELAKSICMHAAAMKPQVLSYTQLEYEFIQKEKVALIAELQKENEEFKRLGKPLHKIPQYISRSELTESVLQAQEQKLREDLKAQGKPEAIWDKILPGQMERFVADSTLLDQRLTLLGQFYVMDDKKTIAQVLEAKSKELGDEIEIIEYIRFELGEGIEKKVEDFAAEVAAQMQ.

The involved in Mg(2+) ion dislocation from EF-Tu stretch occupies residues 82–85; it reads TDFV.

This sequence belongs to the EF-Ts family.

The protein localises to the cytoplasm. Its function is as follows. Associates with the EF-Tu.GDP complex and induces the exchange of GDP to GTP. It remains bound to the aminoacyl-tRNA.EF-Tu.GTP complex up to the GTP hydrolysis stage on the ribosome. This chain is Elongation factor Ts, found in Helicobacter hepaticus (strain ATCC 51449 / 3B1).